The following is a 462-amino-acid chain: Alanine racemase (462 aa).

The Proton acceptor; specific for D-alanine role is filled by Lys34. An N6-(pyridoxal phosphate)lysine modification is found at Lys34. A unknown insert region spans residues 73–132 (ASWHESVFRHCEKNYTVIRRSNPVKNSVSQNFFNYFSGLQQCFAPRNDGSSIHATTPKAL). Arg193 provides a ligand contact to substrate. The region spanning 286 to 332 (DLSNNLSYKEEFEGDTERRTAAYINVREDSSTGSTYKLPLEGGYSRG) is the RPE1 insert domain. Tyr357 serves as the catalytic Proton acceptor; specific for L-alanine. Met405 provides a ligand contact to substrate.

Belongs to the alanine racemase family. Requires pyridoxal 5'-phosphate as cofactor.

The catalysed reaction is L-alanine = D-alanine. It functions in the pathway amino-acid biosynthesis; D-alanine biosynthesis; D-alanine from L-alanine: step 1/1. In terms of biological role, catalyzes the interconversion of L-alanine and D-alanine. May also act on other amino acids. The protein is Alanine racemase (alr) of Rickettsia felis (strain ATCC VR-1525 / URRWXCal2) (Rickettsia azadi).